Reading from the N-terminus, the 323-residue chain is Methenyltetrahydromethanopterin cyclohydrolase (323 aa).

This sequence belongs to the MCH family.

It is found in the cytoplasm. It carries out the reaction 5,10-methenyl-5,6,7,8-tetrahydromethanopterin + H2O = N(5)-formyl-5,6,7,8-tetrahydromethanopterin + H(+). It functions in the pathway one-carbon metabolism; methanogenesis from CO(2); 5,10-methenyl-5,6,7,8-tetrahydromethanopterin from CO(2): step 3/3. Functionally, catalyzes the reversible interconversion of 5-formyl-H(4)MPT to methenyl-H(4)MPT(+). The chain is Methenyltetrahydromethanopterin cyclohydrolase from Methanococcus maripaludis (strain DSM 14266 / JCM 13030 / NBRC 101832 / S2 / LL).